Here is a 628-residue protein sequence, read N- to C-terminus: Glutamine--fructose-6-phosphate aminotransferase [isomerizing] (628 aa).

Cysteine 2 (nucleophile; for GATase activity) is an active-site residue. Residues 2–229 (CGIVGYVGHR…QDQAVVLTAD (228 aa)) form the Glutamine amidotransferase type-2 domain. The segment at 61–94 (ETDSNDGDGLGGSTGLGHTRWATHGRPTDRNAHP) is disordered. SIS domains follow at residues 301-440 (SDQE…ARGT) and 473-618 (LAER…VDKP). Lysine 623 serves as the catalytic For Fru-6P isomerization activity.

In terms of assembly, homodimer.

Its subcellular location is the cytoplasm. It carries out the reaction D-fructose 6-phosphate + L-glutamine = D-glucosamine 6-phosphate + L-glutamate. Its function is as follows. Catalyzes the first step in hexosamine metabolism, converting fructose-6P into glucosamine-6P using glutamine as a nitrogen source. The chain is Glutamine--fructose-6-phosphate aminotransferase [isomerizing] from Mycolicibacterium smegmatis (strain ATCC 700084 / mc(2)155) (Mycobacterium smegmatis).